Here is a 493-residue protein sequence, read N- to C-terminus: Cysteine--tRNA ligase (493 aa).

C29 provides a ligand contact to Zn(2+). A 'HIGH' region motif is present at residues 31-41; sequence VTVYDLCHLGH. The interval 154 to 179 is disordered; it reads KLSGRDPDDQQQGASGRTADGEESRK. The Zn(2+) site is built by C213, H238, and E242. The 'KMSKS' region motif lies at 270-274; the sequence is KMSKS. Position 273 (K273) interacts with ATP.

The protein belongs to the class-I aminoacyl-tRNA synthetase family. As to quaternary structure, monomer. The cofactor is Zn(2+).

It is found in the cytoplasm. It carries out the reaction tRNA(Cys) + L-cysteine + ATP = L-cysteinyl-tRNA(Cys) + AMP + diphosphate. This chain is Cysteine--tRNA ligase, found in Synechococcus sp. (strain CC9605).